Reading from the N-terminus, the 412-residue chain is MSPAAAQTAIPLPSTDLPVKIITNGLKNLNYTSKQGYGNFDTHFYDGQDEVSPSGLLKIRKSYREKSKYPDYLPTWDPTEKYGPLEFHEYHDPALRADGNFSNLFAKENVGQLKVKKITPKLGLEINGIQLTDLSDAAKDELALLVAQKGVVVFRNQNFADEGPDYVTEYGRHFGKLHIHQTSGHPQNNPELHITFRRPDAEEFARVFDDSTSSGGWHTDVSYELQPPSYTFFSVVEGPDGGGDTLFADTIEAFDRLSKPLQDFLSTLHVIHSSKEQAENSQRQGGIKRRAPVTHIHPLVRVHPVLKKKCLYVNRAFSRKIVELKRQESESLLNFLYNLVESSHDLQLRAKWEPHSVVIWDNRRVQHSAVIDWEEPIHRHAFRITPQAERPVEDLKFLNDENYYPSSLTLDI.

Ser52 is subject to Phosphoserine. The Fe cation site is built by His218 and Asp220. Residues Thr245 and Trp352 each coordinate 2-oxoglutarate. His367 serves as a coordination point for Fe cation. 2-oxoglutarate contacts are provided by Arg379 and Arg383.

It belongs to the TfdA dioxygenase family. The cofactor is Fe(2+).

It functions in the pathway organosulfur degradation; alkanesulfonate degradation. Its function is as follows. Acts as an alpha-ketoglutarate-dependent dioxygenase active on sulfonates. Although taurine is a poor substrate, a variety of other sulfonates are utilized, with the best natural substrates being isethionate and taurocholate. This Saccharomyces cerevisiae (strain ATCC 204508 / S288c) (Baker's yeast) protein is Alpha-ketoglutarate-dependent sulfonate dioxygenase (JLP1).